We begin with the raw amino-acid sequence, 338 residues long: Lipoate-protein ligase A (338 aa).

The BPL/LPL catalytic domain occupies 29–216 (PATQRVLFLW…AFFAHYGERV (188 aa)). ATP is bound by residues Arg71, 76-79 (GAVF), and Lys134. Lys134 serves as a coordination point for (R)-lipoate.

This sequence belongs to the LplA family. As to quaternary structure, monomer.

It localises to the cytoplasm. It carries out the reaction L-lysyl-[lipoyl-carrier protein] + (R)-lipoate + ATP = N(6)-[(R)-lipoyl]-L-lysyl-[lipoyl-carrier protein] + AMP + diphosphate + H(+). It participates in protein modification; protein lipoylation via exogenous pathway; protein N(6)-(lipoyl)lysine from lipoate: step 1/2. Its pathway is protein modification; protein lipoylation via exogenous pathway; protein N(6)-(lipoyl)lysine from lipoate: step 2/2. Catalyzes both the ATP-dependent activation of exogenously supplied lipoate to lipoyl-AMP and the transfer of the activated lipoyl onto the lipoyl domains of lipoate-dependent enzymes. This is Lipoate-protein ligase A from Escherichia coli (strain SMS-3-5 / SECEC).